A 417-amino-acid chain; its full sequence is Carboxypeptidase B (417 aa).

Residues methionine 1–alanine 15 form the signal peptide. The propeptide at histidine 16–arginine 110 is activation peptide. In terms of domain architecture, Peptidase M14 spans lysine 118–valine 412. The cysteines at positions 173 and 186 are disulfide-linked. The Zn(2+) site is built by histidine 176 and glutamate 179. Substrate-binding positions include histidine 176–glutamate 179, arginine 234, and asparagine 251–arginine 252. Cystine bridges form between cysteine 245-cysteine 268 and cysteine 259-cysteine 273. Histidine 304 lines the Zn(2+) pocket. Substrate contacts are provided by residues serine 305–tyrosine 306 and tyrosine 356. Glutamate 378 acts as the Proton donor/acceptor in catalysis.

It belongs to the peptidase M14 family. Zn(2+) serves as cofactor. In terms of tissue distribution, pancreas.

The protein localises to the secreted. Its subcellular location is the zymogen granule lumen. It carries out the reaction Preferential release of a C-terminal lysine or arginine amino acid.. This is Carboxypeptidase B (CPB1) from Homo sapiens (Human).